Reading from the N-terminus, the 317-residue chain is Aspartate carbamoyltransferase catalytic subunit (317 aa).

Carbamoyl phosphate contacts are provided by Arg65 and Thr66. Lys93 provides a ligand contact to L-aspartate. Residues Arg115, His145, and Gln148 each contribute to the carbamoyl phosphate site. 2 residues coordinate L-aspartate: Arg178 and Arg233. Carbamoyl phosphate contacts are provided by Gly274 and Pro275.

This sequence belongs to the aspartate/ornithine carbamoyltransferase superfamily. ATCase family. As to quaternary structure, heterododecamer (2C3:3R2) of six catalytic PyrB chains organized as two trimers (C3), and six regulatory PyrI chains organized as three dimers (R2).

The enzyme catalyses carbamoyl phosphate + L-aspartate = N-carbamoyl-L-aspartate + phosphate + H(+). It participates in pyrimidine metabolism; UMP biosynthesis via de novo pathway; (S)-dihydroorotate from bicarbonate: step 2/3. In terms of biological role, catalyzes the condensation of carbamoyl phosphate and aspartate to form carbamoyl aspartate and inorganic phosphate, the committed step in the de novo pyrimidine nucleotide biosynthesis pathway. This Bordetella parapertussis (strain 12822 / ATCC BAA-587 / NCTC 13253) protein is Aspartate carbamoyltransferase catalytic subunit.